The following is a 667-amino-acid chain: DNA ligase (667 aa).

NAD(+)-binding positions include 32 to 36 (DSEYD), 81 to 82 (SL), and E110. K112 serves as the catalytic N6-AMP-lysine intermediate. 4 residues coordinate NAD(+): R133, E167, K283, and K307. 4 residues coordinate Zn(2+): C401, C404, C419, and C424. Residues 586-667 (EGHPEFSGKT…FVDKQNELNS (82 aa)) form the BRCT domain.

This sequence belongs to the NAD-dependent DNA ligase family. LigA subfamily. Mg(2+) serves as cofactor. Requires Mn(2+) as cofactor.

The enzyme catalyses NAD(+) + (deoxyribonucleotide)n-3'-hydroxyl + 5'-phospho-(deoxyribonucleotide)m = (deoxyribonucleotide)n+m + AMP + beta-nicotinamide D-nucleotide.. Functionally, DNA ligase that catalyzes the formation of phosphodiester linkages between 5'-phosphoryl and 3'-hydroxyl groups in double-stranded DNA using NAD as a coenzyme and as the energy source for the reaction. It is essential for DNA replication and repair of damaged DNA. In Staphylococcus aureus (strain MRSA252), this protein is DNA ligase.